The following is a 699-amino-acid chain: uncharacterized protein (699 aa).

3 disordered regions span residues 175 to 208 (PTLG…ASLS), 289 to 364 (PTAK…EEPD), and 539 to 603 (RAKE…KEYL). Over residues 183 to 194 (PSKHGDHSDSKT) the composition is skewed to basic and acidic residues. Positions 195–208 (YESPISNSQAASLS) are enriched in polar residues. Residues 308–322 (SKHKKRPKRLSKFKQ) are compositionally biased toward basic residues. The segment covering 323 to 338 (AKLETKKSGNKDHATS) has biased composition (basic and acidic residues). 2 stretches are compositionally biased toward polar residues: residues 339 to 360 (SEKL…SSSI) and 548 to 573 (HSNA…NTKL). The span at 574 to 603 (NPKEEDKSTVESELKAPPKEKSSETSKEYL) shows a compositional bias: basic and acidic residues.

The protein localises to the cytoplasm. This is an uncharacterized protein from Schizosaccharomyces pombe (strain 972 / ATCC 24843) (Fission yeast).